The sequence spans 122 residues: Large ribosomal subunit protein uL14 (122 aa).

This sequence belongs to the universal ribosomal protein uL14 family. As to quaternary structure, part of the 50S ribosomal subunit. Forms a cluster with proteins L3 and L19. In the 70S ribosome, L14 and L19 interact and together make contacts with the 16S rRNA in bridges B5 and B8.

Binds to 23S rRNA. Forms part of two intersubunit bridges in the 70S ribosome. In Maricaulis maris (strain MCS10) (Caulobacter maris), this protein is Large ribosomal subunit protein uL14.